The chain runs to 124 residues: Replication restart protein PriB (124 aa).

The 101-residue stretch at 12–112 folds into the SSB domain; sequence IDNCLILSGS…VHAEHIEFID (101 aa).

Belongs to the PriB family. In terms of assembly, homodimer. Interacts with PriA and DnaT. Component of the replication restart primosome. Primosome assembly occurs via a 'hand-off' mechanism. PriA binds to replication forks, subsequently PriB then DnaT bind; DnaT then displaces ssDNA to generate the helicase loading substrate.

Its function is as follows. Involved in the restart of stalled replication forks, which reloads the replicative helicase on sites other than the origin of replication; the PriA-PriB pathway is the major replication restart pathway. During primosome assembly it facilitates complex formation between PriA and DnaT on DNA; stabilizes PriA on DNA. Stimulates the DNA unwinding activity of PriA helicase. This is Replication restart protein PriB from Actinobacillus pleuropneumoniae serotype 5b (strain L20).